The primary structure comprises 301 residues: Isonocardicin synthase (301 aa).

In terms of assembly, monomer.

The enzyme catalyses nocardicin G + S-adenosyl-L-methionine = isonocardicin C + S-methyl-5'-thioadenosine + H(+). It catalyses the reaction nocardicin E + S-adenosyl-L-methionine = isonocardicin A + S-methyl-5'-thioadenosine + H(+). It functions in the pathway antibiotic biosynthesis. Its function is as follows. Involved in the biosynthesis of the beta-lactam antibiotic nocardicin A. In the presence of S-adenosyl-L-methionine (AdoMet), catalyzes the transfer of a 3-amino-3-carboxypropyl group from AdoMet to nocardicin G, forming isonocardicin C. Can also catalyze the transformation of nocardicin E and F to isonocardicin A and B, respectively, but in vivo substrate is probably nocardicin G. This is Isonocardicin synthase from Nocardia uniformis subsp. tsuyamanensis.